Reading from the N-terminus, the 379-residue chain is Phospho-N-acetylmuramoyl-pentapeptide-transferase (379 aa).

The next 10 membrane-spanning stretches (helical) occupy residues 27-47 (FRTA…GPAV), 76-96 (TMGG…WADL), 100-120 (FVWI…TDDY), 135-155 (AKMG…VLVQ), 185-205 (PHIW…VLVG), 218-238 (GLAI…TYVS), 255-275 (VGEL…FLWY), 283-303 (FMGD…AVII), 307-327 (LLLP…ILQV), and 356-376 (KIIV…LTTL).

The protein belongs to the glycosyltransferase 4 family. MraY subfamily. Requires Mg(2+) as cofactor.

It is found in the cell inner membrane. The enzyme catalyses UDP-N-acetyl-alpha-D-muramoyl-L-alanyl-gamma-D-glutamyl-meso-2,6-diaminopimeloyl-D-alanyl-D-alanine + di-trans,octa-cis-undecaprenyl phosphate = di-trans,octa-cis-undecaprenyl diphospho-N-acetyl-alpha-D-muramoyl-L-alanyl-D-glutamyl-meso-2,6-diaminopimeloyl-D-alanyl-D-alanine + UMP. Its pathway is cell wall biogenesis; peptidoglycan biosynthesis. Functionally, catalyzes the initial step of the lipid cycle reactions in the biosynthesis of the cell wall peptidoglycan: transfers peptidoglycan precursor phospho-MurNAc-pentapeptide from UDP-MurNAc-pentapeptide onto the lipid carrier undecaprenyl phosphate, yielding undecaprenyl-pyrophosphoryl-MurNAc-pentapeptide, known as lipid I. The polypeptide is Phospho-N-acetylmuramoyl-pentapeptide-transferase (Koribacter versatilis (strain Ellin345)).